The chain runs to 173 residues: Probable glutathione peroxidase 5 (173 aa).

The N-myristoyl glycine moiety is linked to residue Gly2. Cys46 is a catalytic residue.

It belongs to the glutathione peroxidase family. As to expression, ubiquitous.

The protein resides in the cell membrane. The enzyme catalyses 2 glutathione + H2O2 = glutathione disulfide + 2 H2O. Its function is as follows. May constitute a glutathione peroxidase-like protective system against oxidative stresses. The protein is Probable glutathione peroxidase 5 (GPX5) of Arabidopsis thaliana (Mouse-ear cress).